A 198-amino-acid polypeptide reads, in one-letter code: Recombination protein RecR (198 aa).

The segment at 57–72 (CSICGNLTDDDPCHIC) adopts a C4-type zinc-finger fold. The 96-residue stretch at 80–175 (EIILVVEDSK…KVTRLARGLA (96 aa)) folds into the Toprim domain.

Belongs to the RecR family.

In terms of biological role, may play a role in DNA repair. It seems to be involved in an RecBC-independent recombinational process of DNA repair. It may act with RecF and RecO. This Streptococcus equi subsp. equi (strain 4047) protein is Recombination protein RecR.